The primary structure comprises 118 residues: Putative pterin-4-alpha-carbinolamine dehydratase (118 aa).

The protein belongs to the pterin-4-alpha-carbinolamine dehydratase family.

The catalysed reaction is (4aS,6R)-4a-hydroxy-L-erythro-5,6,7,8-tetrahydrobiopterin = (6R)-L-erythro-6,7-dihydrobiopterin + H2O. The protein is Putative pterin-4-alpha-carbinolamine dehydratase of Xanthomonas oryzae pv. oryzae (strain MAFF 311018).